We begin with the raw amino-acid sequence, 360 residues long: uncharacterized protein (360 aa).

Solcar repeat units lie at residues 34–153 (VGVL…LSVW), 172–256 (PDWS…FKTN), and 266–355 (NPFV…FKFL). Helical transmembrane passes span 40–60 (VSAS…LDVV), 125–145 (LWSG…FYFT), 178–198 (AVAG…IEMI), 225–247 (ISSF…GIYW), 269–289 (VVSF…THPF), and 327–348 (FSSG…MISF).

This sequence belongs to the mitochondrial carrier (TC 2.A.29) family.

The protein resides in the mitochondrion inner membrane. This is an uncharacterized protein from Caenorhabditis elegans.